A 427-amino-acid polypeptide reads, in one-letter code: UPF0597 protein CPF_0803 (427 aa).

The protein belongs to the UPF0597 family.

In Clostridium perfringens (strain ATCC 13124 / DSM 756 / JCM 1290 / NCIMB 6125 / NCTC 8237 / Type A), this protein is UPF0597 protein CPF_0803.